Reading from the N-terminus, the 407-residue chain is Argininosuccinate synthase (407 aa).

Residues 13-21 and alanine 40 contribute to the ATP site; that span reads AYSGGLDTS. Residues tyrosine 91 and serine 96 each coordinate L-citrulline. Glycine 121 serves as a coordination point for ATP. L-aspartate is bound by residues threonine 123, asparagine 127, and aspartate 128. Residue asparagine 127 coordinates L-citrulline. The L-citrulline site is built by arginine 131, serine 182, serine 191, glutamate 267, and tyrosine 279.

The protein belongs to the argininosuccinate synthase family. Type 1 subfamily. In terms of assembly, homotetramer.

It localises to the cytoplasm. It catalyses the reaction L-citrulline + L-aspartate + ATP = 2-(N(omega)-L-arginino)succinate + AMP + diphosphate + H(+). It participates in amino-acid biosynthesis; L-arginine biosynthesis; L-arginine from L-ornithine and carbamoyl phosphate: step 2/3. The chain is Argininosuccinate synthase from Rhizobium etli (strain ATCC 51251 / DSM 11541 / JCM 21823 / NBRC 15573 / CFN 42).